Reading from the N-terminus, the 396-residue chain is tRNA (guanine(9)-N1)-methyltransferase (396 aa).

Basic and acidic residues-rich tracts occupy residues methionine 1 to valine 18 and aspartate 52 to aspartate 73. The tract at residues methionine 1–alanine 109 is disordered. The 219-residue stretch at threonine 139–lysine 357 folds into the SAM-dependent MTase TRM10-type domain. S-adenosyl-L-methionine contacts are provided by residues leucine 264–serine 265, glycine 284, aspartate 288–histidine 292, cysteine 296, leucine 310, and glutamine 322–leucine 324. The active-site Proton acceptor is aspartate 288. Residues lysine 354–glutamate 396 are disordered. The span at lysine 359–valine 374 shows a compositional bias: basic and acidic residues.

This sequence belongs to the class IV-like SAM-binding methyltransferase superfamily. TRM10 family. As to quaternary structure, monomer.

It is found in the cytoplasm. The protein resides in the nucleus. The enzyme catalyses guanosine(9) in tRNA + S-adenosyl-L-methionine = N(1)-methylguanosine(9) in tRNA + S-adenosyl-L-homocysteine + H(+). S-adenosyl-L-methionine-dependent guanine N(1)-methyltransferase that catalyzes the formation of N(1)-methylguanine at position 9 (m1G9) in cytoplasmic tRNA. This chain is tRNA (guanine(9)-N1)-methyltransferase, found in Aspergillus fumigatus (strain ATCC MYA-4609 / CBS 101355 / FGSC A1100 / Af293) (Neosartorya fumigata).